Reading from the N-terminus, the 552-residue chain is uncharacterized protein (552 aa).

The 193-residue stretch at 8–200 folds into the DhaL domain; sequence KLFAEMIIQG…LAIVYAGFLK (193 aa).

This is an uncharacterized protein from Staphylococcus saprophyticus subsp. saprophyticus (strain ATCC 15305 / DSM 20229 / NCIMB 8711 / NCTC 7292 / S-41).